The chain runs to 432 residues: Bifunctional protein GlmU (432 aa).

Residues 1–223 are pyrophosphorylase; the sequence is MGKKSIIILA…EENFKGVNSK (223 aa). Residues 9 to 12, Lys-23, Gln-75, and 82 to 83 contribute to the UDP-N-acetyl-alpha-D-glucosamine site; these read LAAG and GT. Asp-103 is a Mg(2+) binding site. Gly-135, Glu-149, Asn-164, and Asn-221 together coordinate UDP-N-acetyl-alpha-D-glucosamine. A Mg(2+)-binding site is contributed by Asn-221. The interval 224 to 244 is linker; the sequence is VELADAEVIHQNRIKKEFMKA. The tract at residues 245-432 is N-acetyltransferase; it reads GVIMRLPDTI…FYKHFSSKKK (188 aa). UDP-N-acetyl-alpha-D-glucosamine-binding residues include Arg-308 and Lys-325. His-336 functions as the Proton acceptor in the catalytic mechanism. Residues Tyr-339 and Asn-350 each contribute to the UDP-N-acetyl-alpha-D-glucosamine site. Acetyl-CoA is bound by residues 359 to 360, Ser-378, Ala-396, and Arg-413; that span reads NY.

It in the N-terminal section; belongs to the N-acetylglucosamine-1-phosphate uridyltransferase family. This sequence in the C-terminal section; belongs to the transferase hexapeptide repeat family. In terms of assembly, homotrimer. Requires Mg(2+) as cofactor.

Its subcellular location is the cytoplasm. The catalysed reaction is alpha-D-glucosamine 1-phosphate + acetyl-CoA = N-acetyl-alpha-D-glucosamine 1-phosphate + CoA + H(+). It carries out the reaction N-acetyl-alpha-D-glucosamine 1-phosphate + UTP + H(+) = UDP-N-acetyl-alpha-D-glucosamine + diphosphate. Its pathway is nucleotide-sugar biosynthesis; UDP-N-acetyl-alpha-D-glucosamine biosynthesis; N-acetyl-alpha-D-glucosamine 1-phosphate from alpha-D-glucosamine 6-phosphate (route II): step 2/2. It functions in the pathway nucleotide-sugar biosynthesis; UDP-N-acetyl-alpha-D-glucosamine biosynthesis; UDP-N-acetyl-alpha-D-glucosamine from N-acetyl-alpha-D-glucosamine 1-phosphate: step 1/1. The protein operates within bacterial outer membrane biogenesis; LPS lipid A biosynthesis. Functionally, catalyzes the last two sequential reactions in the de novo biosynthetic pathway for UDP-N-acetylglucosamine (UDP-GlcNAc). The C-terminal domain catalyzes the transfer of acetyl group from acetyl coenzyme A to glucosamine-1-phosphate (GlcN-1-P) to produce N-acetylglucosamine-1-phosphate (GlcNAc-1-P), which is converted into UDP-GlcNAc by the transfer of uridine 5-monophosphate (from uridine 5-triphosphate), a reaction catalyzed by the N-terminal domain. The sequence is that of Bifunctional protein GlmU from Aliarcobacter butzleri (strain RM4018) (Arcobacter butzleri).